We begin with the raw amino-acid sequence, 479 residues long: uncharacterized protein (479 aa).

The next 10 membrane-spanning stretches (helical) occupy residues 11-31 (ILMAIPLITFLLPAPDGLSLI), 43-63 (IVGLVLKPYGEPVILLAAIAV), 90-110 (GTTWLIFTAFTLSSAFVITGL), 151-171 (SGGIIFPIINSVVVALGSDPE), 195-215 (IFLTAMAPNALALSLMAPILG), 223-243 (WFLAASVPGLLCLFLIPLICY), 274-294 (KALSVLFVIALFGWIFSNSLH), 295-315 (INATIVAIIVMVLCIVLSIVT), 328-348 (TLVWYGGIIGMSGLLEKSGFF), and 447-467 (WWITGAIIAFGSLIIHLTIGM).

This sequence belongs to the SLC13A/DASS transporter (TC 2.A.47) family. DIT1 subfamily.

It is found in the cell inner membrane. This is an uncharacterized protein from Haemophilus influenzae (strain ATCC 51907 / DSM 11121 / KW20 / Rd).